Here is a 697-residue protein sequence, read N- to C-terminus: Long-chain-fatty-acid--CoA ligase 6 (697 aa).

The chain crosses the membrane as a helical; Signal-anchor for type III membrane protein span at residues 25 to 45 (LSATTLVSVGALAAVLAYWLT). The Cytoplasmic portion of the chain corresponds to 46–697 (HRPKALQPPC…QIEELYLVSV (652 aa)).

It belongs to the ATP-dependent AMP-binding enzyme family. The cofactor is Mg(2+).

It is found in the mitochondrion outer membrane. The protein localises to the peroxisome membrane. It localises to the microsome membrane. The protein resides in the endoplasmic reticulum membrane. It catalyses the reaction a long-chain fatty acid + ATP + CoA = a long-chain fatty acyl-CoA + AMP + diphosphate. It carries out the reaction (5Z,8Z,11Z,14Z)-eicosatetraenoate + ATP + CoA = (5Z,8Z,11Z,14Z)-eicosatetraenoyl-CoA + AMP + diphosphate. The catalysed reaction is 15-hydroxy-(5Z,8Z,11Z,13E)-eicosatetraenoate + ATP + CoA = 15-hydroxy-(5Z,8Z,11Z,13E)-eicosatetraenoyl-CoA + AMP + diphosphate. The enzyme catalyses 12-hydroxy-(5Z,8Z,10E,14Z)-eicosatetraenoate + ATP + CoA = 12-hydroxy-(5Z,8Z,10E,14Z)-eicosatetraenoyl-CoA + AMP + diphosphate. It catalyses the reaction 5-hydroxy-(6E,8Z,11Z,14Z)-eicosatetraenoate + ATP + CoA = 5-hydroxy-(6E,8Z,11Z,14Z)-eicosatetraenoyl-CoA + AMP + diphosphate. It carries out the reaction hexadecanoate + ATP + CoA = hexadecanoyl-CoA + AMP + diphosphate. The catalysed reaction is (E)-hexadec-2-enoate + ATP + CoA = (2E)-hexadecenoyl-CoA + AMP + diphosphate. In terms of biological role, catalyzes the conversion of long-chain fatty acids to their active form acyl-CoA for both synthesis of cellular lipids, and degradation via beta-oxidation. Plays an important role in fatty acid metabolism in brain and the acyl-CoAs produced may be utilized exclusively for the synthesis of the brain lipid. This chain is Long-chain-fatty-acid--CoA ligase 6 (Acsl6), found in Mus musculus (Mouse).